The sequence spans 294 residues: 4-hydroxy-tetrahydrodipicolinate synthase (294 aa).

Pyruvate is bound at residue threonine 47. Tyrosine 135 acts as the Proton donor/acceptor in catalysis. Lysine 163 functions as the Schiff-base intermediate with substrate in the catalytic mechanism. Pyruvate is bound at residue threonine 205.

It belongs to the DapA family. In terms of assembly, homotetramer; dimer of dimers.

The protein localises to the cytoplasm. It carries out the reaction L-aspartate 4-semialdehyde + pyruvate = (2S,4S)-4-hydroxy-2,3,4,5-tetrahydrodipicolinate + H2O + H(+). The protein operates within amino-acid biosynthesis; L-lysine biosynthesis via DAP pathway; (S)-tetrahydrodipicolinate from L-aspartate: step 3/4. Its function is as follows. Catalyzes the condensation of (S)-aspartate-beta-semialdehyde [(S)-ASA] and pyruvate to 4-hydroxy-tetrahydrodipicolinate (HTPA). This Rickettsia akari (strain Hartford) protein is 4-hydroxy-tetrahydrodipicolinate synthase.